A 201-amino-acid polypeptide reads, in one-letter code: Small ribosomal subunit protein uS4c (201 aa).

The S4 RNA-binding domain occupies 89 to 152; the sequence is MRLDNILFRL…NSRTLVQNLL (64 aa).

Belongs to the universal ribosomal protein uS4 family. Part of the 30S ribosomal subunit. Contacts protein S5. The interaction surface between S4 and S5 is involved in control of translational fidelity.

The protein resides in the plastid. The protein localises to the chloroplast. Its function is as follows. One of the primary rRNA binding proteins, it binds directly to 16S rRNA where it nucleates assembly of the body of the 30S subunit. Functionally, with S5 and S12 plays an important role in translational accuracy. The protein is Small ribosomal subunit protein uS4c (rps4) of Arabidopsis thaliana (Mouse-ear cress).